A 294-amino-acid chain; its full sequence is 4-hydroxy-tetrahydrodipicolinate synthase (294 aa).

Threonine 47 is a pyruvate binding site. The active-site Proton donor/acceptor is the tyrosine 135. The active-site Schiff-base intermediate with substrate is lysine 163. Threonine 205 is a binding site for pyruvate.

The protein belongs to the DapA family. Homotetramer; dimer of dimers.

It is found in the cytoplasm. It carries out the reaction L-aspartate 4-semialdehyde + pyruvate = (2S,4S)-4-hydroxy-2,3,4,5-tetrahydrodipicolinate + H2O + H(+). Its pathway is amino-acid biosynthesis; L-lysine biosynthesis via DAP pathway; (S)-tetrahydrodipicolinate from L-aspartate: step 3/4. Its function is as follows. Catalyzes the condensation of (S)-aspartate-beta-semialdehyde [(S)-ASA] and pyruvate to 4-hydroxy-tetrahydrodipicolinate (HTPA). In Rickettsia rickettsii, this protein is 4-hydroxy-tetrahydrodipicolinate synthase.